The chain runs to 272 residues: Shikimate dehydrogenase (NADP(+)) (272 aa).

Shikimate is bound by residues 14–16 and T61; that span reads SLS. K65 functions as the Proton acceptor in the catalytic mechanism. Position 102 (D102) interacts with shikimate. Residues 127–131, 151–156, and L215 each bind NADP(+); these read GAGGA and NRTPSK. Y217 is a shikimate binding site. G239 is an NADP(+) binding site.

It belongs to the shikimate dehydrogenase family. In terms of assembly, homodimer.

The enzyme catalyses shikimate + NADP(+) = 3-dehydroshikimate + NADPH + H(+). It functions in the pathway metabolic intermediate biosynthesis; chorismate biosynthesis; chorismate from D-erythrose 4-phosphate and phosphoenolpyruvate: step 4/7. In terms of biological role, involved in the biosynthesis of the chorismate, which leads to the biosynthesis of aromatic amino acids. Catalyzes the reversible NADPH linked reduction of 3-dehydroshikimate (DHSA) to yield shikimate (SA). The chain is Shikimate dehydrogenase (NADP(+)) from Coxiella burnetii (strain CbuK_Q154) (Coxiella burnetii (strain Q154)).